The following is a 229-amino-acid chain: Large ribosomal subunit protein uL1 (229 aa).

The protein belongs to the universal ribosomal protein uL1 family. As to quaternary structure, part of the 50S ribosomal subunit.

Functionally, binds directly to 23S rRNA. The L1 stalk is quite mobile in the ribosome, and is involved in E site tRNA release. Its function is as follows. Protein L1 is also a translational repressor protein, it controls the translation of the L11 operon by binding to its mRNA. The sequence is that of Large ribosomal subunit protein uL1 from Pelagibacter ubique (strain HTCC1062).